Here is a 237-residue protein sequence, read N- to C-terminus: C-type lectin domain family 4 member A (237 aa).

Over 1-48 (MTSEITYAEVRFKNEFKSSGINTASSAASKERTAPHKSNTGFPKLLCA) the chain is Cytoplasmic. An ITIM motif motif is present at residues 5-10 (ITYAEV). Residues 49-69 (SLLIFFLLLAISFFIAFVIFF) traverse the membrane as a helical; Signal-anchor for type II membrane protein segment. At 70–237 (QKYSQLLEKK…SVCEMMKIHL (168 aa)) the chain is on the extracellular side. Disulfide bonds link Cys-106–Cys-117, Cys-134–Cys-230, and Cys-203–Cys-222. Residues 113–231 (FSSNCYFIST…CLGPQRSVCE (119 aa)) enclose the C-type lectin domain. Residues Val-143, Asn-145, and Glu-149 each coordinate Ca(2+). An N-linked (GlcNAc...) asparagine glycan is attached at Asn-185. 3 residues coordinate Ca(2+): Glu-195, Ser-197, and Glu-201. Alpha-D-mannopyranose-binding positions include 195-197 (EPS) and Glu-201. 207–209 (NFR) lines the N-acetyl-D-glucosamine pocket. Residues Asn-218, Asp-219, and Glu-231 each coordinate Ca(2+).

In terms of assembly, may interact with PTPN6 via its ITIM motif. As to expression, expressed preferentially in hematopoietic tissues. Expressed in all circulating Ag-presenting cells such as dendritic cells, myeloid cells, monocytes, macrophages, B-cells and epidermal Langerhans cells (at protein level). Expressed in peripheral blood leukocytes, neutrophils, moderate quantities in spleen, lymph node, and bone marrow, and at very low levels in thymus.

It is found in the cell membrane. C-type lectin receptor that binds carbohydrates mannose and fucose but also weakly interacts with N-acetylglucosamine (GlcNAc) in a Ca(2+)-dependent manner. Involved in regulating immune reactivity. Once triggered by antigen, it is internalized by clathrin-dependent endocytosis and delivers its antigenic cargo into the antigen presentation pathway resulting in cross-priming of CD8(+) T cells. This cross-presentation and cross-priming are enhanced by TLR7 and TLR8 agonists with increased expansion of the CD8(+) T cells, high production of IFNG and TNF with reduced levels of IL4, IL5 and IL13. In plasmacytoid dendritic cells, inhibits TLR9-mediated IFNA and TNF production. May be involved via its ITIM motif (immunoreceptor tyrosine-based inhibitory motifs) in the inhibition of B-cell-receptor-mediated calcium mobilization and protein tyrosine phosphorylation. In terms of biological role, (Microbial infection) Involved in the interaction between HIV-1 virus and dendritic cells. Enhances HIV-1 binding/entry and virus infection. Requires ITIM motif-associated signal transduction pathway involving phosphatases PTPN6 and PTPN11, SYK, Src kinases and MAP kinases. This is C-type lectin domain family 4 member A from Homo sapiens (Human).